A 207-amino-acid polypeptide reads, in one-letter code: Carbonic anhydrase 2 (207 aa).

Zn(2+)-binding residues include Cys51, Asp53, His104, and Cys107.

Belongs to the beta-class carbonic anhydrase family. Zn(2+) serves as cofactor.

It carries out the reaction hydrogencarbonate + H(+) = CO2 + H2O. Functionally, catalyzes the reversible hydration of carbon dioxide to form bicarbonate. The sequence is that of Carbonic anhydrase 2 (mtcA2) from Mycobacterium tuberculosis (strain CDC 1551 / Oshkosh).